The chain runs to 261 residues: UPF0328 protein ECU02_0020/ECU04_1700 (261 aa).

A disordered region spans residues 1 to 20 (MSITSIPQPHETNEQHHTEI). Basic and acidic residues predominate over residues 11-20 (ETNEQHHTEI).

This sequence belongs to the UPF0328 family.

This chain is UPF0328 protein ECU02_0020/ECU04_1700, found in Encephalitozoon cuniculi (strain GB-M1) (Microsporidian parasite).